Reading from the N-terminus, the 397-residue chain is Serpin B10 (397 aa).

A disulfide bridge connects residues Cys-68 and Cys-395. The short motif at 74–77 (KKRK) is the Nuclear localization signal element.

Belongs to the serpin family. Ov-serpin subfamily. Expressed specifically in myeloid cells and the bone marrow.

The protein resides in the nucleus. It is found in the cytoplasm. Its function is as follows. Protease inhibitor that may play a role in the regulation of protease activities during hematopoiesis and apoptosis induced by TNF. May regulate protease activities in the cytoplasm and in the nucleus. This Homo sapiens (Human) protein is Serpin B10 (SERPINB10).